We begin with the raw amino-acid sequence, 740 residues long: Ion-translocating oxidoreductase complex subunit C (740 aa).

4Fe-4S ferredoxin-type domains follow at residues 369-397 (GEPQ…QQLY) and 407-436 (KATT…VQYF). Residues Cys377, Cys380, Cys383, Cys387, Cys416, Cys419, Cys422, and Cys426 each coordinate [4Fe-4S] cluster. The disordered stretch occupies residues 598-716 (AKARKLEQQQ…EPEEQVDPRK (119 aa)).

It belongs to the 4Fe4S bacterial-type ferredoxin family. RnfC subfamily. In terms of assembly, the complex is composed of six subunits: RsxA, RsxB, RsxC, RsxD, RsxE and RsxG. [4Fe-4S] cluster is required as a cofactor.

The protein localises to the cell inner membrane. Part of a membrane-bound complex that couples electron transfer with translocation of ions across the membrane. Required to maintain the reduced state of SoxR. In Shigella flexneri serotype 5b (strain 8401), this protein is Ion-translocating oxidoreductase complex subunit C.